Consider the following 343-residue polypeptide: L-threonine 3-dehydrogenase (343 aa).

Residue cysteine 40 coordinates Zn(2+). Catalysis depends on charge relay system residues threonine 42 and histidine 45. Zn(2+) contacts are provided by histidine 65, glutamate 66, cysteine 95, cysteine 98, cysteine 101, and cysteine 109. NAD(+) is bound by residues isoleucine 177, aspartate 197, arginine 202, leucine 264–isoleucine 266, and isoleucine 288–tyrosine 289.

Belongs to the zinc-containing alcohol dehydrogenase family. Homotetramer. The cofactor is Zn(2+).

It is found in the cytoplasm. It catalyses the reaction L-threonine + NAD(+) = (2S)-2-amino-3-oxobutanoate + NADH + H(+). It participates in amino-acid degradation; L-threonine degradation via oxydo-reductase pathway; glycine from L-threonine: step 1/2. In terms of biological role, catalyzes the NAD(+)-dependent oxidation of L-threonine to 2-amino-3-ketobutyrate. The protein is L-threonine 3-dehydrogenase of Aliivibrio fischeri (strain ATCC 700601 / ES114) (Vibrio fischeri).